The sequence spans 206 residues: Ribosomal RNA large subunit methyltransferase E (206 aa).

Residues glycine 55, tryptophan 57, aspartate 75, aspartate 91, and aspartate 116 each contribute to the S-adenosyl-L-methionine site. The Proton acceptor role is filled by lysine 156.

This sequence belongs to the class I-like SAM-binding methyltransferase superfamily. RNA methyltransferase RlmE family.

The protein resides in the cytoplasm. The enzyme catalyses uridine(2552) in 23S rRNA + S-adenosyl-L-methionine = 2'-O-methyluridine(2552) in 23S rRNA + S-adenosyl-L-homocysteine + H(+). In terms of biological role, specifically methylates the uridine in position 2552 of 23S rRNA at the 2'-O position of the ribose in the fully assembled 50S ribosomal subunit. This Blochmanniella floridana protein is Ribosomal RNA large subunit methyltransferase E.